The sequence spans 597 residues: UvrABC system protein C (597 aa).

Residues 15–93 (NSPGVYQYFD…IKKHQPRFNV (79 aa)) form the GIY-YIG domain. Residues 207–242 (KDSLQRFRNQMKQHSEKMEFEDAQRIKNKIDVLENY) enclose the UVR domain.

The protein belongs to the UvrC family. In terms of assembly, interacts with UvrB in an incision complex.

Its subcellular location is the cytoplasm. The UvrABC repair system catalyzes the recognition and processing of DNA lesions. UvrC both incises the 5' and 3' sides of the lesion. The N-terminal half is responsible for the 3' incision and the C-terminal half is responsible for the 5' incision. The sequence is that of UvrABC system protein C from Christiangramia forsetii (strain DSM 17595 / CGMCC 1.15422 / KT0803) (Gramella forsetii).